A 388-amino-acid polypeptide reads, in one-letter code: Succinyl-diaminopimelate desuccinylase (388 aa).

His84 is a Zn(2+) binding site. Residue Asp86 is part of the active site. Asp115 serves as a coordination point for Zn(2+). Glu146 acts as the Proton acceptor in catalysis. Zn(2+) is bound by residues Glu147, Glu175, and His360.

This sequence belongs to the peptidase M20A family. DapE subfamily. In terms of assembly, homodimer. Zn(2+) serves as cofactor. The cofactor is Co(2+).

It carries out the reaction N-succinyl-(2S,6S)-2,6-diaminopimelate + H2O = (2S,6S)-2,6-diaminopimelate + succinate. Its pathway is amino-acid biosynthesis; L-lysine biosynthesis via DAP pathway; LL-2,6-diaminopimelate from (S)-tetrahydrodipicolinate (succinylase route): step 3/3. Its function is as follows. Catalyzes the hydrolysis of N-succinyl-L,L-diaminopimelic acid (SDAP), forming succinate and LL-2,6-diaminopimelate (DAP), an intermediate involved in the bacterial biosynthesis of lysine and meso-diaminopimelic acid, an essential component of bacterial cell walls. This is Succinyl-diaminopimelate desuccinylase from Helicobacter pylori (strain G27).